A 248-amino-acid polypeptide reads, in one-letter code: Pulmonary surfactant-associated protein A1 (248 aa).

The signal sequence occupies residues 1 to 20 (MWLCPLALNLILMAASGAVC). The region spanning 28–100 (GSPGIPGTPG…PGERGPPGLP (73 aa)) is the Collagen-like domain. 4-hydroxyproline is present on residues Pro-30, Pro-33, Pro-36, Pro-42, Pro-54, Pro-57, Pro-63, Pro-67, and Pro-70. The interval 31–101 (GIPGTPGSHG…GERGPPGLPA (71 aa)) is disordered. The segment covering 42-51 (PGRDGRDGLK) has biased composition (basic and acidic residues). Over residues 54–70 (PGPPGPMGPPGEMPCPP) the composition is skewed to pro residues. Residues 132-248 (MTVGEKVFSS…LYSRLTICEF (117 aa)) form the C-type lectin domain. Cystine bridges form between Cys-155–Cys-246 and Cys-224–Cys-238. N-linked (GlcNAc...) asparagine glycosylation occurs at Asn-207.

It belongs to the SFTPA family. As to quaternary structure, oligomeric complex of 6 set of homotrimers. Interacts with CD93. (Microbial infection) Binds M.bovis cell surface protein Apa via its glycosylated sites; probably also recognizes other bacterial moieties. In terms of assembly, (Microbial infection) Binds to the S.aureus extracellular adherence protein, Eap, thereby enhancing phagocytosis and killing of S.aureus by alveolar macrophages. As to quaternary structure, (Microbial infection) Interacts with M.pneumoniae CARDS toxin; CARDS probably uses this protein as a receptor. In terms of processing, N-acetylated.

The protein resides in the secreted. It is found in the extracellular space. It localises to the extracellular matrix. The protein localises to the surface film. Its function is as follows. In presence of calcium ions, it binds to surfactant phospholipids and contributes to lower the surface tension at the air-liquid interface in the alveoli of the mammalian lung and is essential for normal respiration. Enhances the expression of MYO18A/SP-R210 on alveolar macrophages. (Microbial infection) Recognition of M.tuberculosis by dendritic cells may occur partially via this molecule. Can recognize, bind, and opsonize pathogens to enhance their elimination by alveolar macrophages. Functionally, (Microbial infection) Binds M.pneumoniae CARDS toxin, serves as one receptor for this pathogen. When SFTPA1 is down-regulated by siRNA, less toxin binds to human cells and less vacuolization (a symptom of M.pneumoniae infection) is seen. The polypeptide is Pulmonary surfactant-associated protein A1 (SFTPA1) (Homo sapiens (Human)).